A 213-amino-acid polypeptide reads, in one-letter code: Large ribosomal subunit protein uL1 (213 aa).

Belongs to the universal ribosomal protein uL1 family. As to quaternary structure, part of the 50S ribosomal subunit.

Probably involved in E site tRNA release. Binds directly to 23S rRNA. Functionally, protein L1 is also a translational repressor protein, it controls the translation of its operon by binding to its mRNA. This chain is Large ribosomal subunit protein uL1, found in Methanothermococcus thermolithotrophicus (Methanococcus thermolithotrophicus).